The primary structure comprises 205 residues: Urease accessory protein UreG (205 aa).

Residue 14-21 (GPVGSGKT) coordinates GTP.

It belongs to the SIMIBI class G3E GTPase family. UreG subfamily. In terms of assembly, homodimer. UreD, UreF and UreG form a complex that acts as a GTP-hydrolysis-dependent molecular chaperone, activating the urease apoprotein by helping to assemble the nickel containing metallocenter of UreC. The UreE protein probably delivers the nickel.

It localises to the cytoplasm. Functionally, facilitates the functional incorporation of the urease nickel metallocenter. This process requires GTP hydrolysis, probably effectuated by UreG. This is Urease accessory protein UreG from Proteus mirabilis (strain HI4320).